The chain runs to 382 residues: MSLVVMATGGTGGHIYPAVATARELNARGHETLLLGQRGGMEERVAAEQGLSFEGVDAGKLARSGQGRPDPRELFRAVRGVVEARRVLQARRPALVVGYGGFASLPGVLAAQSLGIATVLHEQNARLGLTQRVAVGRARAVGTAYEQVLGLPAGEGTLVGMPVREERLSREEAQRRLGLHSGPLTVFVMGGSQGSLFLNNSVPDTLRNILGKEGLLSGLGSEAGQIDLDFTHPRAGGAAVQVLHSTGPRWLADVAPRVHDLEWYHAVGYVDTVAAWAAADLAITRAGTGTLAEAAFHGVPLVMVPLPESSENHQYHNALSVQQAGAGRVVEQKNVQEALGAAVLECAEPGTRMAMRDAALARAQIGAAARFADLIEQHLPRS.

Residues 11 to 13 (TGG), N124, R164, S192, and Q314 contribute to the UDP-N-acetyl-alpha-D-glucosamine site.

It belongs to the glycosyltransferase 28 family. MurG subfamily.

It localises to the cell membrane. The enzyme catalyses di-trans,octa-cis-undecaprenyl diphospho-N-acetyl-alpha-D-muramoyl-L-alanyl-D-glutamyl-meso-2,6-diaminopimeloyl-D-alanyl-D-alanine + UDP-N-acetyl-alpha-D-glucosamine = di-trans,octa-cis-undecaprenyl diphospho-[N-acetyl-alpha-D-glucosaminyl-(1-&gt;4)]-N-acetyl-alpha-D-muramoyl-L-alanyl-D-glutamyl-meso-2,6-diaminopimeloyl-D-alanyl-D-alanine + UDP + H(+). It functions in the pathway cell wall biogenesis; peptidoglycan biosynthesis. Functionally, cell wall formation. Catalyzes the transfer of a GlcNAc subunit on undecaprenyl-pyrophosphoryl-MurNAc-pentapeptide (lipid intermediate I) to form undecaprenyl-pyrophosphoryl-MurNAc-(pentapeptide)GlcNAc (lipid intermediate II). This is UDP-N-acetylglucosamine--N-acetylmuramyl-(pentapeptide) pyrophosphoryl-undecaprenol N-acetylglucosamine transferase from Deinococcus deserti (strain DSM 17065 / CIP 109153 / LMG 22923 / VCD115).